We begin with the raw amino-acid sequence, 567 residues long: Eukaryotic translation initiation factor 3 subunit D (567 aa).

Disordered stretches follow at residues 12–34 (PVKSAWGPPETEQIGGDIPYAPF) and 122–160 (GQNVQRGGRGGRYGSSGGRGAGDTVVSRSSGAGGARGRR). A compositionally biased stretch (gly residues) spans 128–142 (GGRGGRYGSSGGRGA). An RNA gate region spans residues 300 to 314 (PFDYLTVNENAYDSP).

This sequence belongs to the eIF-3 subunit D family. As to quaternary structure, component of the eukaryotic translation initiation factor 3 (eIF-3) complex. The eIF-3 complex appears to include tif32/eif3a, SPAC25G10.08/eif3b, tif33/eif3c, SPBC4C3.07/eif3f, tif35/eif3g and sum1/eif3i. This set of common subunits may also associate exclusively with either moe1/eif3d and int6/eif3e, or with SPAC821.05/eif3h and SPAC1751.03/eif3m. The eIF-3 complex may also include SPAC3A12.13c/eif3j.

Its subcellular location is the cytoplasm. Its function is as follows. mRNA cap-binding component of the eukaryotic translation initiation factor 3 (eIF-3) complex, which is involved in protein synthesis of a specialized repertoire of mRNAs and, together with other initiation factors, stimulates binding of mRNA and methionyl-tRNAi to the 40S ribosome. The eIF-3 complex specifically targets and initiates translation of a subset of mRNAs involved in cell proliferation. In the eIF-3 complex, eif3d specifically recognizes and binds the 7-methylguanosine cap of a subset of mRNAs. This is Eukaryotic translation initiation factor 3 subunit D (moe1) from Schizosaccharomyces pombe (strain 972 / ATCC 24843) (Fission yeast).